The following is a 479-amino-acid chain: Adenosylhomocysteinase (479 aa).

Residues T56, D133, and E199 each coordinate substrate. T200–T202 provides a ligand contact to NAD(+). Substrate contacts are provided by K229 and D233. NAD(+)-binding positions include N234, G263–G268, E286, N321, I342–H344, and N390.

The protein belongs to the adenosylhomocysteinase family. Homotetramer. Requires NAD(+) as cofactor.

It carries out the reaction S-adenosyl-L-homocysteine + H2O = L-homocysteine + adenosine. Its pathway is amino-acid biosynthesis; L-homocysteine biosynthesis; L-homocysteine from S-adenosyl-L-homocysteine: step 1/1. In terms of biological role, adenosylhomocysteine is a competitive inhibitor of S-adenosyl-L-methionine-dependent methyl transferase reactions; therefore adenosylhomocysteinase may play a key role in the control of methylations via regulation of the intracellular concentration of adenosylhomocysteine. In Plasmodium chabaudi chabaudi, this protein is Adenosylhomocysteinase.